Here is a 293-residue protein sequence, read N- to C-terminus: Probable adenylate kinase 1, chloroplastic (293 aa).

The N-terminal 26 residues, 1-26 (MAAVQRLLRASASGGAAAAAAAARRR), are a transit peptide targeting the mitochondrion. 70 to 75 (GVGKGT) contributes to the ATP binding site. Residues 90–119 (ATGDLVRDELASSGPLSVQLAEIVNQGKLV) are NMP. Residues T91, R96, 117–119 (KLV), 147–150 (GFPR), and Q154 contribute to the AMP site. The tract at residues 183–231 (GRRICGQCGKNFNLACIDVKGENGLPPIYMAPLLPPNNCMSKLITRADD) is LID. Residues R184 and 193-194 (NF) contribute to the ATP site. R228 and R239 together coordinate AMP.

It belongs to the adenylate kinase family.

Its subcellular location is the mitochondrion. It catalyses the reaction AMP + ATP = 2 ADP. Catalyzes the reversible transfer of the terminal phosphate group between ATP and AMP. Plays an important role in cellular energy homeostasis and in adenine nucleotide metabolism. In Oryza sativa subsp. japonica (Rice), this protein is Probable adenylate kinase 1, chloroplastic.